A 455-amino-acid chain; its full sequence is Phosphomethylpyrimidine synthase (455 aa).

Residues Asn-80, Met-109, Tyr-139, His-175, 195 to 197 (SRG), 236 to 239 (DALR), and Glu-275 each bind substrate. Residue His-279 coordinates Zn(2+). Tyr-302 is a binding site for substrate. Zn(2+) is bound at residue His-343. Positions 423, 426, and 431 each coordinate [4Fe-4S] cluster.

It belongs to the ThiC family. [4Fe-4S] cluster is required as a cofactor.

The catalysed reaction is 5-amino-1-(5-phospho-beta-D-ribosyl)imidazole + S-adenosyl-L-methionine = 4-amino-2-methyl-5-(phosphooxymethyl)pyrimidine + CO + 5'-deoxyadenosine + formate + L-methionine + 3 H(+). The protein operates within cofactor biosynthesis; thiamine diphosphate biosynthesis. Its function is as follows. Catalyzes the synthesis of the hydroxymethylpyrimidine phosphate (HMP-P) moiety of thiamine from aminoimidazole ribotide (AIR) in a radical S-adenosyl-L-methionine (SAM)-dependent reaction. The protein is Phosphomethylpyrimidine synthase of Synechococcus sp. (strain JA-3-3Ab) (Cyanobacteria bacterium Yellowstone A-Prime).